We begin with the raw amino-acid sequence, 288 residues long: Elongation factor Ts (288 aa).

Positions 82 to 85 are involved in Mg(2+) ion dislocation from EF-Tu; sequence TDFV.

The protein belongs to the EF-Ts family.

The protein resides in the cytoplasm. Associates with the EF-Tu.GDP complex and induces the exchange of GDP to GTP. It remains bound to the aminoacyl-tRNA.EF-Tu.GTP complex up to the GTP hydrolysis stage on the ribosome. The chain is Elongation factor Ts from Chlorobium limicola (strain DSM 245 / NBRC 103803 / 6330).